The primary structure comprises 203 residues: Imidazole glycerol phosphate synthase subunit HisH 1 (203 aa).

A Glutamine amidotransferase type-1 domain is found at 1–203 (MIAIIDYNAG…KMIENFVELI (203 aa)). Cysteine 82 serves as the catalytic Nucleophile. Active-site residues include histidine 184 and glutamate 186.

Heterodimer of HisH and HisF.

It is found in the cytoplasm. The enzyme catalyses 5-[(5-phospho-1-deoxy-D-ribulos-1-ylimino)methylamino]-1-(5-phospho-beta-D-ribosyl)imidazole-4-carboxamide + L-glutamine = D-erythro-1-(imidazol-4-yl)glycerol 3-phosphate + 5-amino-1-(5-phospho-beta-D-ribosyl)imidazole-4-carboxamide + L-glutamate + H(+). The catalysed reaction is L-glutamine + H2O = L-glutamate + NH4(+). Its pathway is amino-acid biosynthesis; L-histidine biosynthesis; L-histidine from 5-phospho-alpha-D-ribose 1-diphosphate: step 5/9. Its function is as follows. IGPS catalyzes the conversion of PRFAR and glutamine to IGP, AICAR and glutamate. The HisH subunit provides the glutamine amidotransferase activity that produces the ammonia necessary to HisF for the synthesis of IGP and AICAR. The polypeptide is Imidazole glycerol phosphate synthase subunit HisH 1 (hisH1) (Methanococcus maripaludis (strain DSM 14266 / JCM 13030 / NBRC 101832 / S2 / LL)).